A 256-amino-acid polypeptide reads, in one-letter code: Triosephosphate isomerase (256 aa).

9–11 (NWK) serves as a coordination point for substrate. H96 acts as the Electrophile in catalysis. Residue E168 is the Proton acceptor of the active site. Residues S213 and 234–235 (GG) each bind substrate.

It belongs to the triosephosphate isomerase family. In terms of assembly, homodimer.

The protein resides in the cytoplasm. It catalyses the reaction D-glyceraldehyde 3-phosphate = dihydroxyacetone phosphate. The protein operates within carbohydrate biosynthesis; gluconeogenesis. It functions in the pathway carbohydrate degradation; glycolysis; D-glyceraldehyde 3-phosphate from glycerone phosphate: step 1/1. Its function is as follows. Involved in the gluconeogenesis. Catalyzes stereospecifically the conversion of dihydroxyacetone phosphate (DHAP) to D-glyceraldehyde-3-phosphate (G3P). The sequence is that of Triosephosphate isomerase from Baumannia cicadellinicola subsp. Homalodisca coagulata.